A 121-amino-acid polypeptide reads, in one-letter code: Ribonuclease CL2 (121 aa).

2 residues coordinate substrate: Lys6 and Arg9. The active-site Proton acceptor is His11. 3 cysteine pairs are disulfide-bonded: Cys26–Cys81, Cys42–Cys92, and Cys60–Cys107. Substrate-binding positions include 43 to 47 (KPSNT) and Arg82. His114 (proton donor) is an active-site residue.

It belongs to the pancreatic ribonuclease family.

The protein localises to the secreted. Functionally, pyrimidine-specific nuclease with preference for C. This is Ribonuclease CL2 from Gallus gallus (Chicken).